Consider the following 643-residue polypeptide: Pseudouridylate synthase PUS7L (643 aa).

The Nucleophile role is filled by D284. Residues 370–597 (GFVNYYGPQR…PGCYRPLLAK (228 aa)) form the TRUD domain.

The protein belongs to the pseudouridine synthase TruD family.

The enzyme catalyses a uridine in mRNA = a pseudouridine in mRNA. In terms of biological role, pseudouridine synthase that catalyzes pseudouridylation of mRNAs. The chain is Pseudouridylate synthase PUS7L (pus7l) from Danio rerio (Zebrafish).